The chain runs to 207 residues: Claudin-11 (207 aa).

Residue methionine 1 is a topological domain, cytoplasmic. Residues 2–22 form a helical membrane-spanning segment; sequence VATCLQVVGFVTSFVGWIGII. The Extracellular portion of the chain corresponds to 23–82; sequence VTTSTNDWVVTCSYTIPTCRKMDELGSKGLWADCVMATGLYHCKPLVDILILPGYVQACR. Residues 83–103 form a helical membrane-spanning segment; sequence ALMIAASVLGLPAILLLLTVL. The Cytoplasmic segment spans residues 104-122; that stretch reads PCIRMGHEPGVAKYRRAQL. The helical transmembrane segment at 123 to 143 threads the bilayer; sequence AGVLLILLALCAIVATIWFPV. At 144–157 the chain is on the extracellular side; that stretch reads CAHREITIVSFGYS. The helical transmembrane segment at 158–178 threads the bilayer; the sequence is LYAGWIGAVMCLVGGCVIVCC. At 179-207 the chain is on the cytoplasmic side; that stretch reads SGDAQSFGENRFYYSSGSSSPTHAKSAHV. Phosphoserine is present on residues serine 193, serine 194, serine 197, and serine 198.

This sequence belongs to the claudin family. In terms of assembly, interacts with tetraspanin-3/TSPAN3. Interacts with OCLN.

The protein resides in the cell junction. The protein localises to the tight junction. Its subcellular location is the cell membrane. Functionally, plays a major role in tight junction-specific obliteration of the intercellular space, through calcium-independent cell-adhesion activity. This is Claudin-11 (Cldn11) from Mus musculus (Mouse).